The chain runs to 1216 residues: Sodium/potassium/calcium exchanger 1 (1216 aa).

Residues 1–446 (MGKLIRMGAQ…DLFSVEERRQ (446 aa)) lie on the Extracellular side of the membrane. Residues 94–196 (EATAGRDGTP…KYSPSPLGRM (103 aa)) form a disordered region. Composition is skewed to polar residues over residues 110–135 (NTPS…TPTG) and 144–166 (SATP…SYTR). 2 N-linked (GlcNAc...) asparagine glycosylation sites follow: asparagine 290 and asparagine 303. A helical membrane pass occupies residues 447 to 467 (GWVVLHIFGMMYVFVALAIVC). Residues 468–491 (DEYFVPALGVITDKLQISEDVAGA) are Cytoplasmic-facing. The stretch at 488 to 528 (VAGATFMAAGGSAPELFTSLIGVFISHSNVGIGTIVGSAVF) is one Alpha-1 repeat. Residues 492–512 (TFMAAGGSAPELFTSLIGVFI) traverse the membrane as a helical segment. Residues 513 to 518 (SHSNVG) are Extracellular-facing. A helical transmembrane segment spans residues 519–539 (IGTIVGSAVFNILFVIGTCAL). At 540–557 (FSREILNLTWWPLFRDIT) the chain is on the cytoplasmic side. Residues 558–578 (FYIFDLMMLILFFLDSLIAWW) form a helical membrane-spanning segment. Glutamate 579 is a topological domain (extracellular). Residues 580–600 (SVLLLLAYAFYVFTMKWNQQL) form a helical membrane-spanning segment. Over 601 to 1024 (ELWVKEQLNK…SLEWPETRRK (424 aa)) the chain is Cytoplasmic. Serine 652 is subject to Phosphoserine. The interval 677–1018 (GEARPSKDKE…ENEQPLSLEW (342 aa)) is disordered. Residues 702–712 (AESKPEEEPAK) show a composition bias toward basic and acidic residues. Phosphothreonine is present on threonine 717. One copy of the 1; approximate repeat lies at 796 to 811 (DEDEGEIQAEGGEVKG). The 8 X 17 AA tandem repeats of D-E-D-E-G-E-I-Q-A-G-E-[GA]-G-E-V-[EK]-G stretch occupies residues 796–928 (DEDEGEIQAE…QAGEAGEVEG (133 aa)). A run of 6 repeats spans residues 812 to 828 (DEDE…EVEG), 829 to 845 (DEDE…EVEG), 846 to 862 (DEDE…EVEG), 863 to 879 (DEDE…EVEG), 880 to 896 (DEDE…EVEG), and 897 to 913 (DEDE…EVKG). 7 stretches are compositionally biased toward acidic residues: residues 824–834 (GEVEGDEDEGE), 841–851 (GEVEGDEDEGE), 858–868 (GEVEGDEDEGE), 875–885 (GEVEGDEDEGE), 892–902 (GEVEGDEDEGE), 924–941 (GEVE…DEGE), and 981–1011 (GDSE…EENE). Residues 914-928 (DEGEIQAGEAGEVEG) form an 8; approximate repeat. The chain crosses the membrane as a helical span at residues 1025–1045 (QAIYLFLLPIVFPLWLTVPDV). At 1046–1052 (RRLEAKK) the chain is on the extracellular side. Residues 1053 to 1073 (FFVITFLGSILWIAMFSYLMV) form a helical membrane-spanning segment. The Cytoplasmic segment spans residues 1074–1088 (WWAHQVGETIGISEE). Residues 1089 to 1109 (IMGLTILAAGTSIPDLITSVI) form a helical membrane-spanning segment. The Alpha-2 repeat unit spans residues 1096 to 1127 (AAGTSIPDLITSVIVARKGLGDMAVSSSVGSN). Topologically, residues 1110-1127 (VARKGLGDMAVSSSVGSN) are extracellular. A helical membrane pass occupies residues 1128 to 1148 (IFDITVGLPLPWMLFSLINGL). The Cytoplasmic segment spans residues 1149-1157 (QPVAVSSNG). The chain crosses the membrane as a helical span at residues 1158 to 1178 (LFCAIVLLFLMLLFVISSIAL). Over 1179-1185 (CKWRMNK) the chain is Extracellular. A helical membrane pass occupies residues 1186–1206 (ILGFTMFLLYFVFLIISVMLE). The Cytoplasmic portion of the chain corresponds to 1207-1216 (DRIISCPVSV).

This sequence belongs to the Ca(2+):cation antiporter (CaCA) (TC 2.A.19) family. SLC24A subfamily. The uncleaved signal sequence is required for efficient membrane targeting and proper membrane integration and topology. In terms of processing, glycosylated. As to expression, retina.

The protein resides in the cell membrane. It catalyses the reaction Ca(2+)(out) + K(+)(out) + 4 Na(+)(in) = Ca(2+)(in) + K(+)(in) + 4 Na(+)(out). Calcium, potassium:sodium antiporter that transports 1 Ca(2+) and 1 K(+) in exchange for 4 Na(+). Critical component of the visual transduction cascade, controlling the calcium concentration of outer segments during light and darkness. Light causes a rapid lowering of cytosolic free calcium in the outer segment of both retinal rod and cone photoreceptors and the light-induced lowering of calcium is caused by extrusion via this protein which plays a key role in the process of light adaptation. The sequence is that of Sodium/potassium/calcium exchanger 1 (SLC24A1) from Bos taurus (Bovine).